The primary structure comprises 573 residues: Isocitrate dehydrogenase kinase/phosphatase (573 aa).

ATP is bound by residues 317–323 (APGVRGM) and Lys-338. The active site involves Asp-373.

It belongs to the AceK family.

It is found in the cytoplasm. The catalysed reaction is L-seryl-[isocitrate dehydrogenase] + ATP = O-phospho-L-seryl-[isocitrate dehydrogenase] + ADP + H(+). Bifunctional enzyme which can phosphorylate or dephosphorylate isocitrate dehydrogenase (IDH) on a specific serine residue. This is a regulatory mechanism which enables bacteria to bypass the Krebs cycle via the glyoxylate shunt in response to the source of carbon. When bacteria are grown on glucose, IDH is fully active and unphosphorylated, but when grown on acetate or ethanol, the activity of IDH declines drastically concomitant with its phosphorylation. The sequence is that of Isocitrate dehydrogenase kinase/phosphatase from Pseudomonas fluorescens (strain ATCC BAA-477 / NRRL B-23932 / Pf-5).